The following is a 257-amino-acid chain: Imidazole glycerol phosphate synthase subunit HisF (257 aa).

Catalysis depends on residues Asp-11 and Asp-130.

Belongs to the HisA/HisF family. Heterodimer of HisH and HisF.

It is found in the cytoplasm. It catalyses the reaction 5-[(5-phospho-1-deoxy-D-ribulos-1-ylimino)methylamino]-1-(5-phospho-beta-D-ribosyl)imidazole-4-carboxamide + L-glutamine = D-erythro-1-(imidazol-4-yl)glycerol 3-phosphate + 5-amino-1-(5-phospho-beta-D-ribosyl)imidazole-4-carboxamide + L-glutamate + H(+). It participates in amino-acid biosynthesis; L-histidine biosynthesis; L-histidine from 5-phospho-alpha-D-ribose 1-diphosphate: step 5/9. Functionally, IGPS catalyzes the conversion of PRFAR and glutamine to IGP, AICAR and glutamate. The HisF subunit catalyzes the cyclization activity that produces IGP and AICAR from PRFAR using the ammonia provided by the HisH subunit. The chain is Imidazole glycerol phosphate synthase subunit HisF from Aeromonas salmonicida (strain A449).